We begin with the raw amino-acid sequence, 519 residues long: Transketolase, chloroplastic (519 aa).

Asp-11 lines the Mg(2+) pocket. The thiamine diphosphate site is built by Gly-12 and Asn-41. Mg(2+) contacts are provided by Asn-41 and Ile-43. His-118 provides a ligand contact to thiamine diphosphate. 3 residues coordinate substrate: His-118, Arg-212, and Ser-239. Residues Glu-266 and Phe-293 each coordinate thiamine diphosphate. The Proton donor role is filled by Glu-266. The substrate site is built by His-317, Asp-325, and Arg-376.

This sequence belongs to the transketolase family. Homodimer. It depends on Mg(2+) as a cofactor. The cofactor is Ca(2+). Requires Mn(2+) as cofactor. Co(2+) serves as cofactor. Thiamine diphosphate is required as a cofactor. Constitutively expressed in leaves and roots.

The protein resides in the plastid. It is found in the chloroplast. The enzyme catalyses D-sedoheptulose 7-phosphate + D-glyceraldehyde 3-phosphate = aldehydo-D-ribose 5-phosphate + D-xylulose 5-phosphate. Functionally, catalyzes the transfer of a two-carbon ketol group from a ketose donor to an aldose acceptor, via a covalent intermediate with the cofactor thiamine pyrophosphate. This chain is Transketolase, chloroplastic (TKT3), found in Craterostigma plantagineum (Blue gem).